Consider the following 175-residue polypeptide: tRNA-acetylating toxin 3 (175 aa).

Acetyl-CoA-binding residues include Leu-95, Val-97, Gly-103, Gly-105, Gly-107, Ala-108, Asp-133, Gln-138, Asp-141, and Trp-142. Tyr-143 is a catalytic residue. The acetyl-CoA site is built by Gly-145 and Phe-146.

The protein belongs to the acetyltransferase family. GNAT subfamily. Homodimer (in absence of antitoxin); has a condensed and elongated form. Forms a complex with cognate antitoxin TacA3. Forms a 4:2 antitoxin:toxin complex with cognate antitoxin TacA3. Forms a 4:4 antitoxin:toxin complex with promoter DNA, where 2 TacT3 dimers bridge 2 TacA3 dimers. Only TacA3 contacts promoter DNA in the octomeric form. TacT3 may contact DNA in the hexameric form.

The catalysed reaction is glycyl-tRNA(Gly) + acetyl-CoA = N-acetylglycyl-tRNA(Gly) + CoA + H(+). Its function is as follows. Toxic component of a type II toxin-antitoxin (TA) system. Acetylates tRNA and inhibits translation. Acetylates only Gly-tRNA on all 3 Gly-tRNA(Gly) isoacceptors in situ. In vitro acetylates mainly Ile/Leu and Gly. Overexpression during the lag phase of a tacA3-tacT3 deletion strain leads to a 150-fold increase in persister cells in the presence of cefotaxime and a non-growth state in the absence of antibiotic. Persister cell formation and the growth defect are neutralized by cognate antitoxin TacA3, but not by TacA1 or TacA2. Plays a role in persister cell formation. Functionally, the TacA3-TacT3 complex both represses and derepresses expression of its own operon. The hexameric 4:2 TacA3-TacT3 complex binds promoter DNA and represses its transcription; both subunits are required. The octomeric 4:4 TacA3-TacT3 complex derepresses the operon. The shift from hexameric to octomeric complex probably alters DNA-binding, leading to dissociation from the operator DNA and derepression. The sequence is that of tRNA-acetylating toxin 3 from Salmonella typhimurium (strain 14028s / SGSC 2262).